Consider the following 238-residue polypeptide: Glutamine amidotransferase-like protein chyE (238 aa).

In terms of domain architecture, Glutamine amidotransferase type-1 spans 8-238 (KIAVLINTPP…LERVLQWLSE (231 aa)). C102 functions as the Nucleophile in the catalytic mechanism. Catalysis depends on residues H189 and E191.

Belongs to the peptidase C26 family.

Its pathway is pigment biosynthesis. Functionally, glutamine amidotransferase-like protein; part of the gene cluster that mediates the biosynthesis of the yellow pigment chrysogine. the NRPS chyA mediates the condensation of anthranilic acid and alanine into the intermediate 2-(2-aminopropanamido)benzoic acid. The remainder of the pathway is highly branched yielding at least 13 chrysogine-related compounds. The malonyl transferase chyE converts 2-(2-aminopropanamido)benzoic acid and 2-(2-aminopropanamido)benzamidine into 2-(2-(2-carboxyacetamido)propanamido)benzoic acid and 3-((1-((2-carbamoylphenyl)amino)-1-oxopropan-2-yl)amino)-3-oxopropanoic acid, respectively. ChyD is an amidase, being responsible for the amidation of the carboxylic acid moiety of 2-(2-aminopropanamido)benzoic acid, 2-(2-(2-carboxyacetamido)propanamido)benzoic acid and 2-(2-((4-amino-1-carboxy-4-oxobutyl)amino)propanamido)benzoic acid. ChyC is involved in the same reactions as ChyD, but plays a more minor role in the amidation reactions compared to chyD. The oxidoreductases chyH and chyM are involved in oxidation reactions that form N-pyruvoylanthranilamide from 2-(2-aminopropanamido)benzamidine and (1-((2-carbamoylphenyl)amino)-1-oxopropan-2-yl)glutamine, respectively. N-pyruvoylanthranilamide is further converted via two further branches in the pathway, yielding chrysogine and additional chrysogine-related coumpounds. Chrysogine is likely formed by a spontaneous ring closure from N-pyruvoylanthranilamide. The chain is Glutamine amidotransferase-like protein chyE from Penicillium rubens (strain ATCC 28089 / DSM 1075 / NRRL 1951 / Wisconsin 54-1255) (Penicillium chrysogenum).